A 166-amino-acid polypeptide reads, in one-letter code: Urease accessory protein UreE (166 aa).

Residues 135–156 (EQGAYGGGHHHSHHGDEEFNYG) form a disordered region.

This sequence belongs to the UreE family.

It localises to the cytoplasm. Involved in urease metallocenter assembly. Binds nickel. Probably functions as a nickel donor during metallocenter assembly. This is Urease accessory protein UreE from Ectopseudomonas mendocina (strain ymp) (Pseudomonas mendocina).